A 486-amino-acid chain; its full sequence is Cysteine--tRNA ligase (486 aa).

Cys29 lines the Zn(2+) pocket. The 'HIGH' region motif lies at 31-41; it reads ITVYDYCHLGH. The Zn(2+) site is built by Cys215, His240, and Glu244. Positions 272 to 276 match the 'KMSKS' region motif; the sequence is KMSKS. Lys275 provides a ligand contact to ATP.

It belongs to the class-I aminoacyl-tRNA synthetase family. Monomer. The cofactor is Zn(2+).

It is found in the cytoplasm. It carries out the reaction tRNA(Cys) + L-cysteine + ATP = L-cysteinyl-tRNA(Cys) + AMP + diphosphate. The sequence is that of Cysteine--tRNA ligase from Gloeothece citriformis (strain PCC 7424) (Cyanothece sp. (strain PCC 7424)).